Here is a 469-residue protein sequence, read N- to C-terminus: Glutamate--tRNA ligase (469 aa).

Positions P11–N21 match the 'HIGH' region motif. Residues K243 to R247 carry the 'KMSKS' region motif. K246 is an ATP binding site.

Belongs to the class-I aminoacyl-tRNA synthetase family. Glutamate--tRNA ligase type 1 subfamily. In terms of assembly, monomer.

Its subcellular location is the cytoplasm. It carries out the reaction tRNA(Glu) + L-glutamate + ATP = L-glutamyl-tRNA(Glu) + AMP + diphosphate. Catalyzes the attachment of glutamate to tRNA(Glu) in a two-step reaction: glutamate is first activated by ATP to form Glu-AMP and then transferred to the acceptor end of tRNA(Glu). This Burkholderia ambifaria (strain MC40-6) protein is Glutamate--tRNA ligase.